Reading from the N-terminus, the 282-residue chain is Bis(5'-nucleosyl)-tetraphosphatase, symmetrical (282 aa).

This sequence belongs to the Ap4A hydrolase family.

It carries out the reaction P(1),P(4)-bis(5'-adenosyl) tetraphosphate + H2O = 2 ADP + 2 H(+). Its function is as follows. Hydrolyzes diadenosine 5',5'''-P1,P4-tetraphosphate to yield ADP. The polypeptide is Bis(5'-nucleosyl)-tetraphosphatase, symmetrical (Burkholderia pseudomallei (strain 1106a)).